A 393-amino-acid polypeptide reads, in one-letter code: NAD(P)H-quinone oxidoreductase subunit H, chloroplastic (393 aa).

This sequence belongs to the complex I 49 kDa subunit family. NDH is composed of at least 16 different subunits, 5 of which are encoded in the nucleus.

The protein localises to the plastid. Its subcellular location is the chloroplast thylakoid membrane. It carries out the reaction a plastoquinone + NADH + (n+1) H(+)(in) = a plastoquinol + NAD(+) + n H(+)(out). The catalysed reaction is a plastoquinone + NADPH + (n+1) H(+)(in) = a plastoquinol + NADP(+) + n H(+)(out). NDH shuttles electrons from NAD(P)H:plastoquinone, via FMN and iron-sulfur (Fe-S) centers, to quinones in the photosynthetic chain and possibly in a chloroplast respiratory chain. The immediate electron acceptor for the enzyme in this species is believed to be plastoquinone. Couples the redox reaction to proton translocation, and thus conserves the redox energy in a proton gradient. This Solanum lycopersicum (Tomato) protein is NAD(P)H-quinone oxidoreductase subunit H, chloroplastic.